A 201-amino-acid chain; its full sequence is Small ribosomal subunit protein uS4 (201 aa).

The region spanning 91–151 (SRLDNVVYRA…DKSINTLPFE (61 aa)) is the S4 RNA-binding domain.

The protein belongs to the universal ribosomal protein uS4 family. Part of the 30S ribosomal subunit. Contacts protein S5. The interaction surface between S4 and S5 is involved in control of translational fidelity.

Its function is as follows. One of the primary rRNA binding proteins, it binds directly to 16S rRNA where it nucleates assembly of the body of the 30S subunit. Functionally, with S5 and S12 plays an important role in translational accuracy. The chain is Small ribosomal subunit protein uS4 from Mycolicibacterium gilvum (strain PYR-GCK) (Mycobacterium gilvum (strain PYR-GCK)).